A 295-amino-acid chain; its full sequence is ATP synthase gamma chain (295 aa).

Belongs to the ATPase gamma chain family. F-type ATPases have 2 components, CF(1) - the catalytic core - and CF(0) - the membrane proton channel. CF(1) has five subunits: alpha(3), beta(3), gamma(1), delta(1), epsilon(1). CF(0) has three main subunits: a, b and c.

The protein localises to the cell inner membrane. Its function is as follows. Produces ATP from ADP in the presence of a proton gradient across the membrane. The gamma chain is believed to be important in regulating ATPase activity and the flow of protons through the CF(0) complex. The polypeptide is ATP synthase gamma chain (Sulfurovum sp. (strain NBC37-1)).